A 328-amino-acid chain; its full sequence is DNA-directed RNA polymerase subunit alpha (328 aa).

An alpha N-terminal domain (alpha-NTD) region spans residues 1 to 230 (MIQITGRKFK…IILDHFMFIE (230 aa)). The interval 257–328 (PEDVMSKKVE…FGLSLRKGDK (72 aa)) is alpha C-terminal domain (alpha-CTD).

The protein belongs to the RNA polymerase alpha chain family. Homodimer. The RNAP catalytic core consists of 2 alpha, 1 beta, 1 beta' and 1 omega subunit. When a sigma factor is associated with the core the holoenzyme is formed, which can initiate transcription.

The enzyme catalyses RNA(n) + a ribonucleoside 5'-triphosphate = RNA(n+1) + diphosphate. DNA-dependent RNA polymerase catalyzes the transcription of DNA into RNA using the four ribonucleoside triphosphates as substrates. The protein is DNA-directed RNA polymerase subunit alpha of Fervidobacterium nodosum (strain ATCC 35602 / DSM 5306 / Rt17-B1).